An 87-amino-acid chain; its full sequence is Large ribosomal subunit protein uL23c (87 aa).

It belongs to the universal ribosomal protein uL23 family. In terms of assembly, part of the 50S ribosomal subunit.

Its subcellular location is the plastid. The protein resides in the chloroplast. In terms of biological role, binds to 23S rRNA. The chain is Large ribosomal subunit protein uL23c (rpl23) from Ostreococcus tauri.